The chain runs to 554 residues: Perforin-1 (554 aa).

Positions 1–20 (MAAYLFLLGLFLLLPRPVPA) are cleaved as a signal peptide. Intrachain disulfides connect Cys22-Cys75, Cys30-Cys72, and Cys101-Cys175. Residues 26-374 (TRSECKQNHK…HYVMSRARWR (349 aa)) enclose the MACPF domain. The beta stranded transmembrane segment at 128 to 148 (WRAGLDVNPKPEANVHVSVAG) threads the bilayer. Asn204 is a glycosylation site (N-linked (GlcNAc...) asparagine). 4 disulfides stabilise this stretch: Cys241-Cys407, Cys376-Cys392, Cys380-Cys394, and Cys396-Cys406. A beta stranded membrane pass occupies residues 256 to 278 (CLSVEAQVSIGAQASVSSEYKAC). The EGF-like domain maps to 375–407 (DCNRPCRAGQHKSSRDSCQCVCQDSNVTNQDCC). The 119-residue stretch at 395–513 (VCQDSNVTNQ…FHEVNCPLNH (119 aa)) folds into the C2 domain. N-linked (GlcNAc...) asparagine glycosylation occurs at Asn400. 12 residues coordinate Ca(2+): Gly428, Asp429, Thr432, Asp435, Asn454, Asp483, Ala484, Asp485, Trp488, Asp489, Asp490, and Asp491. Disulfide bonds link Cys496-Cys509 and Cys524-Cys533. The N-linked (GlcNAc...) asparagine glycan is linked to Asn548.

The protein belongs to the complement C6/C7/C8/C9 family. In terms of assembly, monomer, as soluble protein. Homooligomer; homooligomerizes to form a pore-forming ring. Ca(2+) is required as a cofactor. In terms of processing, N-glycosylated. As to expression, detected in large granular lymphocytes and lymphokine-activated killer cells.

The protein localises to the cytolytic granule. The protein resides in the secreted. It is found in the cell membrane. It localises to the endosome lumen. Functionally, pore-forming protein that plays a key role in granzyme-mediated programmed cell death, and in defense against virus-infected or neoplastic cells. Can insert into the membrane of target cells in its calcium-bound form, oligomerize and form large pores. Promotes cytolysis and apoptosis of target cells by mediating the passage and uptake of cytotoxic granzymes. Facilitates the delivery of cationic cargo protein, while anionic or neural proteins are not delivered efficiently. Perforin pores allow the release of mature caspase-7 (CASP7) into the extracellular milieu. The protein is Perforin-1 (Prf1) of Rattus norvegicus (Rat).